Reading from the N-terminus, the 425-residue chain is Multifunctional CCA protein (425 aa).

2 residues coordinate ATP: G8 and R11. 2 residues coordinate CTP: G8 and R11. Residues D21 and D23 each coordinate Mg(2+). R91, R141, and R144 together coordinate ATP. CTP contacts are provided by R91, R141, and R144. The HD domain maps to 230 to 331 (TGVHLMMVLD…VRLLERCDAI (102 aa)).

It belongs to the tRNA nucleotidyltransferase/poly(A) polymerase family. Bacterial CCA-adding enzyme type 1 subfamily. Monomer. Can also form homodimers and oligomers. Requires Mg(2+) as cofactor. Ni(2+) serves as cofactor.

The catalysed reaction is a tRNA precursor + 2 CTP + ATP = a tRNA with a 3' CCA end + 3 diphosphate. It catalyses the reaction a tRNA with a 3' CCA end + 2 CTP + ATP = a tRNA with a 3' CCACCA end + 3 diphosphate. Catalyzes the addition and repair of the essential 3'-terminal CCA sequence in tRNAs without using a nucleic acid template. Adds these three nucleotides in the order of C, C, and A to the tRNA nucleotide-73, using CTP and ATP as substrates and producing inorganic pyrophosphate. tRNA 3'-terminal CCA addition is required both for tRNA processing and repair. Also involved in tRNA surveillance by mediating tandem CCA addition to generate a CCACCA at the 3' terminus of unstable tRNAs. While stable tRNAs receive only 3'-terminal CCA, unstable tRNAs are marked with CCACCA and rapidly degraded. The sequence is that of Multifunctional CCA protein from Acidovorax ebreus (strain TPSY) (Diaphorobacter sp. (strain TPSY)).